Here is a 469-residue protein sequence, read N- to C-terminus: Glutamate--tRNA ligase (469 aa).

A 'HIGH' region motif is present at residues 11–21; that stretch reads PSPTGFIHLGN. Positions 243 to 247 match the 'KMSKS' region motif; sequence KMSKR. Residue Lys246 participates in ATP binding.

The protein belongs to the class-I aminoacyl-tRNA synthetase family. Glutamate--tRNA ligase type 1 subfamily. As to quaternary structure, monomer.

The protein localises to the cytoplasm. The enzyme catalyses tRNA(Glu) + L-glutamate + ATP = L-glutamyl-tRNA(Glu) + AMP + diphosphate. Catalyzes the attachment of glutamate to tRNA(Glu) in a two-step reaction: glutamate is first activated by ATP to form Glu-AMP and then transferred to the acceptor end of tRNA(Glu). The polypeptide is Glutamate--tRNA ligase (Burkholderia cenocepacia (strain HI2424)).